A 411-amino-acid chain; its full sequence is Adenylosuccinate synthetase (411 aa).

GTP contacts are provided by residues 11–17 (GDEGKGK) and 39–41 (GHT). The active-site Proton acceptor is aspartate 12. Positions 12 and 39 each coordinate Mg(2+). IMP contacts are provided by residues 12-15 (DEGK), 37-40 (NAGH), threonine 121, arginine 135, glutamine 215, threonine 230, and arginine 294. Histidine 40 (proton donor) is an active-site residue. Position 290–296 (290–296 (TTTKRPR)) interacts with substrate. Residues arginine 296, 322 to 324 (KLD), and 400 to 402 (STS) each bind GTP.

Belongs to the adenylosuccinate synthetase family. Homodimer. The cofactor is Mg(2+).

The protein resides in the cytoplasm. The catalysed reaction is IMP + L-aspartate + GTP = N(6)-(1,2-dicarboxyethyl)-AMP + GDP + phosphate + 2 H(+). Its pathway is purine metabolism; AMP biosynthesis via de novo pathway; AMP from IMP: step 1/2. Its function is as follows. Plays an important role in the de novo pathway of purine nucleotide biosynthesis. Catalyzes the first committed step in the biosynthesis of AMP from IMP. The polypeptide is Adenylosuccinate synthetase (Helicobacter pylori (strain P12)).